Reading from the N-terminus, the 277-residue chain is MVELCGGEGEGQIMLATELAQLRAMARELEAKMDPDRVAARELCRALASSVDRSIRLAASCFPPPEHPPPAAGNAGRDAAFKKRKGMAKVRRQVRVTSVQDTASLDDGLSWRKYGQKDILGAKYPRAYFRCTHRHTQGCNATKQVQRADGDPLLFDVVYLGDHTCGQAAVAAAAQSAPPEHAGQEQQRQSSLLAAGTEGIHQQVVAEPMAAPFLFTSTAAGGVDDGYFSFISPANSDCQFSSDFSAGSVGVDMDHEARFEDLFSSTLEFFQSEIQNL.

The segment at residues 100 to 168 (QDTASLDDGL…YLGDHTCGQA (69 aa)) is a DNA-binding region (WRKY).

It belongs to the WRKY group III family.

The protein localises to the nucleus. Functionally, may play a role in defense responses. In Oryza sativa subsp. japonica (Rice), this protein is Transcription factor WRKY19.